A 91-amino-acid polypeptide reads, in one-letter code: Probable Fe(2+)-trafficking protein (91 aa).

The protein belongs to the Fe(2+)-trafficking protein family.

Its function is as follows. Could be a mediator in iron transactions between iron acquisition and iron-requiring processes, such as synthesis and/or repair of Fe-S clusters in biosynthetic enzymes. This is Probable Fe(2+)-trafficking protein from Polynucleobacter necessarius subsp. necessarius (strain STIR1).